The chain runs to 314 residues: Aspartate carbamoyltransferase catalytic subunit (314 aa).

Positions 58 and 59 each coordinate carbamoyl phosphate. Position 86 (Lys-86) interacts with L-aspartate. Residues Arg-108, His-136, and Gln-139 each contribute to the carbamoyl phosphate site. The L-aspartate site is built by Arg-169 and Arg-223. Carbamoyl phosphate contacts are provided by Gly-264 and Pro-265.

The protein belongs to the aspartate/ornithine carbamoyltransferase superfamily. ATCase family. In terms of assembly, heterododecamer (2C3:3R2) of six catalytic PyrB chains organized as two trimers (C3), and six regulatory PyrI chains organized as three dimers (R2).

The catalysed reaction is carbamoyl phosphate + L-aspartate = N-carbamoyl-L-aspartate + phosphate + H(+). The protein operates within pyrimidine metabolism; UMP biosynthesis via de novo pathway; (S)-dihydroorotate from bicarbonate: step 2/3. Functionally, catalyzes the condensation of carbamoyl phosphate and aspartate to form carbamoyl aspartate and inorganic phosphate, the committed step in the de novo pyrimidine nucleotide biosynthesis pathway. This Jannaschia sp. (strain CCS1) protein is Aspartate carbamoyltransferase catalytic subunit.